We begin with the raw amino-acid sequence, 413 residues long: Aspartate aminotransferase, cytoplasmic (413 aa).

Positions 39, 141, and 195 each coordinate L-aspartate. Residue K259 is modified to N6-(pyridoxal phosphate)lysine. R387 lines the L-aspartate pocket.

The protein belongs to the class-I pyridoxal-phosphate-dependent aminotransferase family. Homodimer. The cofactor is pyridoxal 5'-phosphate.

Its subcellular location is the cytoplasm. It carries out the reaction L-aspartate + 2-oxoglutarate = oxaloacetate + L-glutamate. It catalyses the reaction L-cysteine + 2-oxoglutarate = 2-oxo-3-sulfanylpropanoate + L-glutamate. The enzyme catalyses (2S)-2-aminobutanoate + 2-oxoglutarate = 2-oxobutanoate + L-glutamate. The catalysed reaction is 3-sulfino-L-alanine + 2-oxoglutarate = 3-sulfinopyruvate + L-glutamate. Functionally, biosynthesis of L-glutamate from L-aspartate or L-cysteine. Important regulator of levels of glutamate, the major excitatory neurotransmitter of the vertebrate central nervous system. Acts as a scavenger of glutamate in brain neuroprotection. The aspartate aminotransferase activity is involved in hepatic glucose synthesis during development and in adipocyte glyceroneogenesis. Using L-cysteine as substrate, regulates levels of mercaptopyruvate, an important source of hydrogen sulfide. Mercaptopyruvate is converted into H(2)S via the action of 3-mercaptopyruvate sulfurtransferase (3MST). Hydrogen sulfide is an important synaptic modulator and neuroprotectant in the brain. The protein is Aspartate aminotransferase, cytoplasmic of Bos taurus (Bovine).